We begin with the raw amino-acid sequence, 183 residues long: Potassium-transporting ATPase KdpC subunit (183 aa).

The chain crosses the membrane as a helical span at residues 10 to 30; it reads ASLLVLSLVTGVAYPLLVTGI.

It belongs to the KdpC family. The system is composed of three essential subunits: KdpA, KdpB and KdpC.

The protein resides in the cell inner membrane. Its function is as follows. Part of the high-affinity ATP-driven potassium transport (or Kdp) system, which catalyzes the hydrolysis of ATP coupled with the electrogenic transport of potassium into the cytoplasm. This subunit acts as a catalytic chaperone that increases the ATP-binding affinity of the ATP-hydrolyzing subunit KdpB by the formation of a transient KdpB/KdpC/ATP ternary complex. In Pseudomonas aeruginosa (strain UCBPP-PA14), this protein is Potassium-transporting ATPase KdpC subunit.